The following is a 570-amino-acid chain: Proline--tRNA ligase (570 aa).

This sequence belongs to the class-II aminoacyl-tRNA synthetase family. ProS type 1 subfamily. In terms of assembly, homodimer.

It localises to the cytoplasm. It carries out the reaction tRNA(Pro) + L-proline + ATP = L-prolyl-tRNA(Pro) + AMP + diphosphate. Catalyzes the attachment of proline to tRNA(Pro) in a two-step reaction: proline is first activated by ATP to form Pro-AMP and then transferred to the acceptor end of tRNA(Pro). As ProRS can inadvertently accommodate and process non-cognate amino acids such as alanine and cysteine, to avoid such errors it has two additional distinct editing activities against alanine. One activity is designated as 'pretransfer' editing and involves the tRNA(Pro)-independent hydrolysis of activated Ala-AMP. The other activity is designated 'posttransfer' editing and involves deacylation of mischarged Ala-tRNA(Pro). The misacylated Cys-tRNA(Pro) is not edited by ProRS. This is Proline--tRNA ligase from Wolinella succinogenes (strain ATCC 29543 / DSM 1740 / CCUG 13145 / JCM 31913 / LMG 7466 / NCTC 11488 / FDC 602W) (Vibrio succinogenes).